The chain runs to 370 residues: tRNA-specific 2-thiouridylase MnmA (370 aa).

Residues 24 to 31 (AMSGGVDS) and leucine 50 each bind ATP. The active-site Nucleophile is cysteine 119. Cysteine 119 and cysteine 215 are oxidised to a cystine. Glycine 143 lines the ATP pocket. The segment at 165-167 (KDQ) is interaction with tRNA. Cysteine 215 serves as the catalytic Cysteine persulfide intermediate.

The protein belongs to the MnmA/TRMU family.

Its subcellular location is the cytoplasm. The catalysed reaction is S-sulfanyl-L-cysteinyl-[protein] + uridine(34) in tRNA + AH2 + ATP = 2-thiouridine(34) in tRNA + L-cysteinyl-[protein] + A + AMP + diphosphate + H(+). Catalyzes the 2-thiolation of uridine at the wobble position (U34) of tRNA, leading to the formation of s(2)U34. The protein is tRNA-specific 2-thiouridylase MnmA of Wolbachia sp. subsp. Drosophila simulans (strain wRi).